The following is a 283-amino-acid chain: uncharacterized protein (283 aa).

The segment at 1–21 is disordered; it reads MSAYTHPMERELSGLSSRGNS. A helical membrane pass occupies residues 41 to 61; sequence SIFIASLVTFGVLMITLLIAL.

This sequence belongs to the APS1/VSP family.

The protein localises to the membrane. This is an uncharacterized protein from Arabidopsis thaliana (Mouse-ear cress).